Here is a 211-residue protein sequence, read N- to C-terminus: Thiamine-phosphate synthase (211 aa).

4-amino-2-methyl-5-(diphosphooxymethyl)pyrimidine contacts are provided by residues Gln37–Lys41 and Asn69. Positions 70 and 89 each coordinate Mg(2+). Ser108 contributes to the 4-amino-2-methyl-5-(diphosphooxymethyl)pyrimidine binding site. Thr134–Thr136 serves as a coordination point for 2-[(2R,5Z)-2-carboxy-4-methylthiazol-5(2H)-ylidene]ethyl phosphate. A 4-amino-2-methyl-5-(diphosphooxymethyl)pyrimidine-binding site is contributed by Lys137. 2-[(2R,5Z)-2-carboxy-4-methylthiazol-5(2H)-ylidene]ethyl phosphate-binding positions include Gly166 and Val186 to Ser187.

The protein belongs to the thiamine-phosphate synthase family. Requires Mg(2+) as cofactor.

The enzyme catalyses 2-[(2R,5Z)-2-carboxy-4-methylthiazol-5(2H)-ylidene]ethyl phosphate + 4-amino-2-methyl-5-(diphosphooxymethyl)pyrimidine + 2 H(+) = thiamine phosphate + CO2 + diphosphate. The catalysed reaction is 2-(2-carboxy-4-methylthiazol-5-yl)ethyl phosphate + 4-amino-2-methyl-5-(diphosphooxymethyl)pyrimidine + 2 H(+) = thiamine phosphate + CO2 + diphosphate. It carries out the reaction 4-methyl-5-(2-phosphooxyethyl)-thiazole + 4-amino-2-methyl-5-(diphosphooxymethyl)pyrimidine + H(+) = thiamine phosphate + diphosphate. Its pathway is cofactor biosynthesis; thiamine diphosphate biosynthesis; thiamine phosphate from 4-amino-2-methyl-5-diphosphomethylpyrimidine and 4-methyl-5-(2-phosphoethyl)-thiazole: step 1/1. Functionally, condenses 4-methyl-5-(beta-hydroxyethyl)thiazole monophosphate (THZ-P) and 2-methyl-4-amino-5-hydroxymethyl pyrimidine pyrophosphate (HMP-PP) to form thiamine monophosphate (TMP). This is Thiamine-phosphate synthase from Klebsiella pneumoniae subsp. pneumoniae (strain ATCC 700721 / MGH 78578).